Here is a 112-residue protein sequence, read N- to C-terminus: UPF0122 protein CPE1714 (112 aa).

Belongs to the UPF0122 family.

Might take part in the signal recognition particle (SRP) pathway. This is inferred from the conservation of its genetic proximity to ftsY/ffh. May be a regulatory protein. This Clostridium perfringens (strain 13 / Type A) protein is UPF0122 protein CPE1714.